Consider the following 749-residue polypeptide: Patatin-like phospholipase domain-containing protein An01g04180 (749 aa).

A disordered region spans residues 1–21 (MNGAEKSAAGDTYDPSTIPDY). The helical transmembrane segment at 87–107 (WPFLFTVFGWITALAFAYTLT) threads the bilayer. The region spanning 277–468 (LCLSGGATFA…RTDIPIKALN (192 aa)) is the PNPLA domain. Residues 308-312 (GTSGG) carry the GXSXG motif. The active-site Nucleophile is Ser310. Residue Asp455 is the Proton acceptor of the active site. The tract at residues 619-726 (AGGRPISPAP…STGSSIFEEV (108 aa)) is disordered. Basic and acidic residues predominate over residues 649 to 664 (PLNERLDHNLPERRGD). Residues 685–707 (SLSENSSNESAARPSSSSSSSRL) are compositionally biased toward low complexity.

It belongs to the PLPL family.

The protein localises to the membrane. In terms of biological role, probable lipid hydrolase. This chain is Patatin-like phospholipase domain-containing protein An01g04180, found in Aspergillus niger (strain ATCC MYA-4892 / CBS 513.88 / FGSC A1513).